A 487-amino-acid chain; its full sequence is N-succinylglutamate 5-semialdehyde dehydrogenase (487 aa).

Residue 221–226 (GSSDTG) coordinates NAD(+). Catalysis depends on residues E244 and C278.

This sequence belongs to the aldehyde dehydrogenase family. AstD subfamily.

It carries out the reaction N-succinyl-L-glutamate 5-semialdehyde + NAD(+) + H2O = N-succinyl-L-glutamate + NADH + 2 H(+). It participates in amino-acid degradation; L-arginine degradation via AST pathway; L-glutamate and succinate from L-arginine: step 4/5. Catalyzes the NAD-dependent reduction of succinylglutamate semialdehyde into succinylglutamate. This is N-succinylglutamate 5-semialdehyde dehydrogenase from Burkholderia ambifaria (strain ATCC BAA-244 / DSM 16087 / CCUG 44356 / LMG 19182 / AMMD) (Burkholderia cepacia (strain AMMD)).